A 355-amino-acid polypeptide reads, in one-letter code: Holliday junction branch migration complex subunit RuvB (355 aa).

Residues Thr4–Tyr195 are large ATPase domain (RuvB-L). Residues Leu34, Arg35, Gly76, Lys79, Thr80, Thr81, Glu142–Tyr144, Arg185, Tyr195, and Arg232 each bind ATP. Thr80 provides a ligand contact to Mg(2+). Positions Thr196 to Asp266 are small ATPAse domain (RuvB-S). Residues Ser269 to Leu355 form a head domain (RuvB-H) region. DNA contacts are provided by Arg305, Arg324, and Arg329.

Belongs to the RuvB family. Homohexamer. Forms an RuvA(8)-RuvB(12)-Holliday junction (HJ) complex. HJ DNA is sandwiched between 2 RuvA tetramers; dsDNA enters through RuvA and exits via RuvB. An RuvB hexamer assembles on each DNA strand where it exits the tetramer. Each RuvB hexamer is contacted by two RuvA subunits (via domain III) on 2 adjacent RuvB subunits; this complex drives branch migration. In the full resolvosome a probable DNA-RuvA(4)-RuvB(12)-RuvC(2) complex forms which resolves the HJ.

Its subcellular location is the cytoplasm. It catalyses the reaction ATP + H2O = ADP + phosphate + H(+). Functionally, the RuvA-RuvB-RuvC complex processes Holliday junction (HJ) DNA during genetic recombination and DNA repair, while the RuvA-RuvB complex plays an important role in the rescue of blocked DNA replication forks via replication fork reversal (RFR). RuvA specifically binds to HJ cruciform DNA, conferring on it an open structure. The RuvB hexamer acts as an ATP-dependent pump, pulling dsDNA into and through the RuvAB complex. RuvB forms 2 homohexamers on either side of HJ DNA bound by 1 or 2 RuvA tetramers; 4 subunits per hexamer contact DNA at a time. Coordinated motions by a converter formed by DNA-disengaged RuvB subunits stimulates ATP hydrolysis and nucleotide exchange. Immobilization of the converter enables RuvB to convert the ATP-contained energy into a lever motion, pulling 2 nucleotides of DNA out of the RuvA tetramer per ATP hydrolyzed, thus driving DNA branch migration. The RuvB motors rotate together with the DNA substrate, which together with the progressing nucleotide cycle form the mechanistic basis for DNA recombination by continuous HJ branch migration. Branch migration allows RuvC to scan DNA until it finds its consensus sequence, where it cleaves and resolves cruciform DNA. This chain is Holliday junction branch migration complex subunit RuvB, found in Cupriavidus metallidurans (strain ATCC 43123 / DSM 2839 / NBRC 102507 / CH34) (Ralstonia metallidurans).